The sequence spans 154 residues: DNA gyrase inhibitor (154 aa).

It belongs to the DNA gyrase inhibitor family. In terms of assembly, interacts with DNA gyrase.

Its subcellular location is the cytoplasm. Inhibits the supercoiling activity of DNA gyrase. Acts by inhibiting DNA gyrase at an early step, prior to (or at the step of) binding of DNA by the gyrase. It protects cells against toxins that target DNA gyrase, by inhibiting activity of these toxins and reducing the formation of lethal double-strand breaks in the cell. This Pectobacterium carotovorum subsp. carotovorum (strain PC1) protein is DNA gyrase inhibitor.